The primary structure comprises 203 residues: Signal peptidase I (203 aa).

The disordered stretch occupies residues 1–26 (MSSESDSPTPQTPPAQPAASQPKADS). Residues 1 to 33 (MSSESDSPTPQTPPAQPAASQPKADSPLMEGIK) are Cytoplasmic-facing. The segment covering 17-26 (PAASQPKADS) has biased composition (low complexity). The chain crosses the membrane as a helical span at residues 34 to 50 (TIGLSVVLALGIRTFVA). At 51–203 (EARYIPSESM…LGELGPPPSY (153 aa)) the chain is on the extracellular side. Catalysis depends on residues S59 and K109.

The protein belongs to the peptidase S26 family.

Its subcellular location is the cell membrane. The enzyme catalyses Cleavage of hydrophobic, N-terminal signal or leader sequences from secreted and periplasmic proteins.. The polypeptide is Signal peptidase I (lepB) (Leptolyngbya laminosa (Phormidium laminosum)).